A 152-amino-acid polypeptide reads, in one-letter code: Peptide deformylase (152 aa).

Residues Cys88 and His130 each coordinate Fe cation. Glu131 is an active-site residue. A Fe cation-binding site is contributed by His134.

This sequence belongs to the polypeptide deformylase family. Requires Fe(2+) as cofactor.

The catalysed reaction is N-terminal N-formyl-L-methionyl-[peptide] + H2O = N-terminal L-methionyl-[peptide] + formate. Functionally, removes the formyl group from the N-terminal Met of newly synthesized proteins. Requires at least a dipeptide for an efficient rate of reaction. N-terminal L-methionine is a prerequisite for activity but the enzyme has broad specificity at other positions. This is Peptide deformylase from Syntrophomonas wolfei subsp. wolfei (strain DSM 2245B / Goettingen).